The following is a 684-amino-acid chain: uncharacterized protein (684 aa).

2 disordered regions span residues 267 to 353 (MGAR…TCTD) and 388 to 449 (SVAS…AERE). Polar residues predominate over residues 316-326 (GMTSAKASTSY). Residues 438–449 (RPTEARRRAERE) are compositionally biased toward basic and acidic residues.

This is an uncharacterized protein from Colorado tick fever virus (strain USA/Florio N-7180) (CTFV).